We begin with the raw amino-acid sequence, 603 residues long: Glutamyl-tRNA(Gln) amidotransferase subunit B, mitochondrial (603 aa).

Disordered regions lie at residues 38 to 61 (RGRD…SNGA) and 72 to 91 (EQAR…PPEH). Polar residues predominate over residues 42–58 (WSSTSRRAIDTQTSGAS).

Belongs to the GatB/GatE family. GatB subfamily. Subunit of the heterotrimeric GatCAB amidotransferase (AdT) complex, composed of A, B and C subunits.

The protein localises to the mitochondrion. It catalyses the reaction L-glutamyl-tRNA(Gln) + L-glutamine + ATP + H2O = L-glutaminyl-tRNA(Gln) + L-glutamate + ADP + phosphate + H(+). Its function is as follows. Allows the formation of correctly charged Gln-tRNA(Gln) through the transamidation of misacylated Glu-tRNA(Gln) in the mitochondria. The reaction takes place in the presence of glutamine and ATP through an activated gamma-phospho-Glu-tRNA(Gln). In Paracoccidioides brasiliensis (strain Pb18), this protein is Glutamyl-tRNA(Gln) amidotransferase subunit B, mitochondrial.